The following is a 124-amino-acid chain: FK506-binding protein 1 (124 aa).

The region spanning 23–122 is the PPIase FKBP-type domain; the sequence is GDTVTIHYDG…VFEVELLGVN (100 aa).

The protein belongs to the FKBP-type PPIase family. FKBP1 subfamily.

It is found in the cytoplasm. It carries out the reaction [protein]-peptidylproline (omega=180) = [protein]-peptidylproline (omega=0). Inhibited by rapamycin. Its function is as follows. PPIases accelerate the folding of proteins. It catalyzes the cis-trans isomerization of proline imidic peptide bonds in oligopeptides. This Candida albicans (strain SC5314 / ATCC MYA-2876) (Yeast) protein is FK506-binding protein 1 (RBP1).